A 196-amino-acid polypeptide reads, in one-letter code: Imidazoleglycerol-phosphate dehydratase (196 aa).

The protein belongs to the imidazoleglycerol-phosphate dehydratase family.

Its subcellular location is the cytoplasm. The enzyme catalyses D-erythro-1-(imidazol-4-yl)glycerol 3-phosphate = 3-(imidazol-4-yl)-2-oxopropyl phosphate + H2O. The protein operates within amino-acid biosynthesis; L-histidine biosynthesis; L-histidine from 5-phospho-alpha-D-ribose 1-diphosphate: step 6/9. In Acidiphilium cryptum (strain JF-5), this protein is Imidazoleglycerol-phosphate dehydratase.